A 228-amino-acid polypeptide reads, in one-letter code: Ribonuclease 3 (228 aa).

The 123-residue stretch at 5-127 (KDALQDRLGY…LFGAIYLDGG (123 aa)) folds into the RNase III domain. Glu-40 lines the Mg(2+) pocket. The active site involves Asp-44. Mg(2+) is bound by residues Asp-113 and Glu-116. The active site involves Glu-116. One can recognise a DRBM domain in the interval 154–224 (DPKTRLQEHL…AEQMLKRLED (71 aa)). The tract at residues 200 to 228 (AEGEAGSRRKAEQQAAEQMLKRLEDKHER) is disordered. Residues 218–228 (MLKRLEDKHER) show a composition bias toward basic and acidic residues.

It belongs to the ribonuclease III family. Homodimer. Requires Mg(2+) as cofactor.

The protein resides in the cytoplasm. It carries out the reaction Endonucleolytic cleavage to 5'-phosphomonoester.. In terms of biological role, digests double-stranded RNA. Involved in the processing of primary rRNA transcript to yield the immediate precursors to the large and small rRNAs (23S and 16S). Processes some mRNAs, and tRNAs when they are encoded in the rRNA operon. Processes pre-crRNA and tracrRNA of type II CRISPR loci if present in the organism. In Alkalilimnicola ehrlichii (strain ATCC BAA-1101 / DSM 17681 / MLHE-1), this protein is Ribonuclease 3.